Reading from the N-terminus, the 151-residue chain is Nucleoside diphosphate kinase (151 aa).

The ATP site is built by Lys11, Phe59, Arg87, Thr93, Arg104, and Asn114. The active-site Pros-phosphohistidine intermediate is His117.

The protein belongs to the NDK family. Homotetramer. The cofactor is Mg(2+).

The protein resides in the cytoplasm. The catalysed reaction is a 2'-deoxyribonucleoside 5'-diphosphate + ATP = a 2'-deoxyribonucleoside 5'-triphosphate + ADP. It catalyses the reaction a ribonucleoside 5'-diphosphate + ATP = a ribonucleoside 5'-triphosphate + ADP. Major role in the synthesis of nucleoside triphosphates other than ATP. The ATP gamma phosphate is transferred to the NDP beta phosphate via a ping-pong mechanism, using a phosphorylated active-site intermediate. The protein is Nucleoside diphosphate kinase of Prochlorococcus marinus (strain NATL1A).